The sequence spans 332 residues: Phospho-N-acetylmuramoyl-pentapeptide-transferase (332 aa).

Transmembrane regions (helical) follow at residues 3-23, 52-72, 74-94, 115-135, 140-160, 172-192, 197-217, 223-243, 248-268, and 311-331; these read FALM…PRFI, MGGT…ATAF, LLTG…VVGF, LALQ…GAGG, VFGH…FWLV, IDGL…VIAF, FDIL…FVYN, IFMG…ISIA, WTLL…MLQV, and VDFF…AILY.

The protein belongs to the glycosyltransferase 4 family. MraY subfamily. Mg(2+) serves as cofactor.

The protein resides in the cell membrane. The enzyme catalyses UDP-N-acetyl-alpha-D-muramoyl-L-alanyl-gamma-D-glutamyl-L-lysyl-D-alanyl-D-alanine + di-trans,octa-cis-undecaprenyl phosphate = Mur2Ac(oyl-L-Ala-gamma-D-Glu-L-Lys-D-Ala-D-Ala)-di-trans,octa-cis-undecaprenyl diphosphate + UMP. It participates in cell wall biogenesis; peptidoglycan biosynthesis. Functionally, catalyzes the initial step of the lipid cycle reactions in the biosynthesis of the cell wall peptidoglycan: transfers peptidoglycan precursor phospho-MurNAc-pentapeptide from UDP-MurNAc-pentapeptide onto the lipid carrier undecaprenyl phosphate, yielding undecaprenyl-pyrophosphoryl-MurNAc-pentapeptide, known as lipid I. In Streptococcus suis (strain 98HAH33), this protein is Phospho-N-acetylmuramoyl-pentapeptide-transferase.